Here is a 295-residue protein sequence, read N- to C-terminus: 3-hydroxy-5-phosphonooxypentane-2,4-dione thiolase (295 aa).

Lys203 (schiff-base intermediate with substrate) is an active-site residue.

It belongs to the DeoC/FbaB aldolase family. In terms of assembly, homodecamer.

The protein resides in the cytoplasm. The enzyme catalyses dihydroxyacetone phosphate + acetyl-CoA = 3-hydroxy-2,4-dioxopentyl phosphate + CoA. Functionally, involved in the degradation of phospho-AI-2, thereby terminating induction of the lsr operon and closing the AI-2 signaling cycle. Catalyzes the transfer of an acetyl moiety from 3-hydroxy-5-phosphonooxypentane-2,4-dione to CoA to form glycerone phosphate and acetyl-CoA. This is 3-hydroxy-5-phosphonooxypentane-2,4-dione thiolase from Klebsiella pneumoniae subsp. pneumoniae (strain ATCC 700721 / MGH 78578).